The following is a 95-amino-acid chain: Progonadoliberin-1 (95 aa).

A signal peptide spans 1-23 (MAPQTSNLWLLLVVMMVMSQGCC). Pyrrolidone carboxylic acid is present on glutamine 24. Glycine amide is present on glycine 33.

The protein belongs to the GnRH family.

It is found in the secreted. In terms of biological role, stimulates the secretion of gonadotropins. The protein is Progonadoliberin-1 (gnrh1) of Pagrus major (Red sea bream).